The primary structure comprises 596 residues: Delta(24(24(1)))-sterol reductase (596 aa).

Residues 1-122 (MSSRYSLRQT…GHATNGHATS (122 aa)) form a disordered region. Gly residues predominate over residues 98 to 112 (NGNGNGYTNGHGNGN). 8 helical membrane-spanning segments follow: residues 168–188 (FGTAAMMTLFPVLMWYMWIGA), 225–245 (VWAWYWSYLIVEGAFYCLLPG), 269–289 (WSLYTTLACLAGLHYSGIWPL), 296–316 (FGPLLSVAILSGFLVSIVAYF), 353–373 (MFFEVRMPWYILLILSLGTAA), 381–401 (YVSGEVWFLVMAHFLYANACA), 419–439 (GFMLIFWNLAGVPLSYCHCTI), and 454–474 (GILAAMFVGYLFWYWVWDSCN). NADP(+) contacts are provided by residues Lys-477, Arg-481, Leu-516, and 528-529 (HY). The helical transmembrane segment at 535–557 (FAVSWGLITGFESPFPWFYPVFF) threads the bilayer. NADP(+) is bound by residues Asp-568, 572–576 (CRRKY), and Tyr-583.

This sequence belongs to the ERG4/ERG24 family.

The protein resides in the endoplasmic reticulum membrane. It carries out the reaction ergosterol + NADP(+) = ergosta-5,7,22,24(28)-tetraen-3beta-ol + NADPH + H(+). It participates in steroid metabolism; ergosterol biosynthesis. Delta(24(24(1)))-sterol reductase; part of the third module of ergosterol biosynthesis pathway that includes the late steps of the pathway. ERG4 catalyzes the last step of ergosterol biosynthesis by converting ergosta-5,7,22,24(28)-tetraen-3beta-ol into ergosterol. The third module or late pathway involves the ergosterol synthesis itself through consecutive reactions that mainly occur in the endoplasmic reticulum (ER) membrane. Firstly, the squalene synthase ERG9 catalyzes the condensation of 2 farnesyl pyrophosphate moieties to form squalene, which is the precursor of all steroids. Squalene synthase is crucial for balancing the incorporation of farnesyl diphosphate (FPP) into sterol and nonsterol isoprene synthesis. Secondly, squalene is converted into lanosterol by the consecutive action of the squalene epoxidase ERG1 and the lanosterol synthase ERG7. Then, the delta(24)-sterol C-methyltransferase ERG6 methylates lanosterol at C-24 to produce eburicol. Eburicol is the substrate of the sterol 14-alpha demethylase encoded by CYP51A, CYP51B and CYP51C, to yield 4,4,24-trimethyl ergosta-8,14,24(28)-trienol. CYP51B encodes the enzyme primarily responsible for sterol 14-alpha-demethylation, and plays an essential role in ascospore formation. CYP51A encodes an additional sterol 14-alpha-demethylase, induced on ergosterol depletion and responsible for the intrinsic variation in azole sensitivity. The third CYP51 isoform, CYP51C, does not encode a sterol 14-alpha-demethylase, but is required for full virulence on host wheat ears. The C-14 reductase ERG24 then reduces the C14=C15 double bond which leads to 4,4-dimethylfecosterol. A sequence of further demethylations at C-4, involving the C-4 demethylation complex containing the C-4 methylsterol oxidases ERG25, the sterol-4-alpha-carboxylate 3-dehydrogenase ERG26 and the 3-keto-steroid reductase ERG27, leads to the production of fecosterol via 4-methylfecosterol. ERG28 has a role as a scaffold to help anchor ERG25, ERG26 and ERG27 to the endoplasmic reticulum. The C-8 sterol isomerase ERG2 then catalyzes the reaction which results in unsaturation at C-7 in the B ring of sterols and thus converts fecosterol to episterol. The sterol-C5-desaturases ERG3A and ERG3BB then catalyze the introduction of a C-5 double bond in the B ring to produce 5-dehydroepisterol. The C-22 sterol desaturases ERG5A and ERG5B further convert 5-dehydroepisterol into ergosta-5,7,22,24(28)-tetraen-3beta-ol by forming the C-22(23) double bond in the sterol side chain. Finally, ergosta-5,7,22,24(28)-tetraen-3beta-ol is substrate of the C-24(28) sterol reductase ERG4 to produce ergosterol. The chain is Delta(24(24(1)))-sterol reductase from Gibberella zeae (strain ATCC MYA-4620 / CBS 123657 / FGSC 9075 / NRRL 31084 / PH-1) (Wheat head blight fungus).